Consider the following 127-residue polypeptide: Protein ApaG (127 aa).

The 126-residue stretch at 2-127 (SELVEHIQVH…FRLAGPNQVH (126 aa)) folds into the ApaG domain.

The protein is Protein ApaG of Chromohalobacter salexigens (strain ATCC BAA-138 / DSM 3043 / CIP 106854 / NCIMB 13768 / 1H11).